Consider the following 291-residue polypeptide: Small ribosomal subunit protein uS2 (291 aa).

Belongs to the universal ribosomal protein uS2 family.

The polypeptide is Small ribosomal subunit protein uS2 (Lawsonia intracellularis (strain PHE/MN1-00)).